The sequence spans 137 residues: Nucleoside diphosphate kinase (137 aa).

The ATP site is built by Lys-9, Phe-57, Arg-85, Thr-91, Arg-102, and Asn-112. Residue His-115 is the Pros-phosphohistidine intermediate of the active site.

It belongs to the NDK family. Homotetramer. Mg(2+) serves as cofactor.

It localises to the cytoplasm. It carries out the reaction a 2'-deoxyribonucleoside 5'-diphosphate + ATP = a 2'-deoxyribonucleoside 5'-triphosphate + ADP. The catalysed reaction is a ribonucleoside 5'-diphosphate + ATP = a ribonucleoside 5'-triphosphate + ADP. Major role in the synthesis of nucleoside triphosphates other than ATP. The ATP gamma phosphate is transferred to the NDP beta phosphate via a ping-pong mechanism, using a phosphorylated active-site intermediate. This is Nucleoside diphosphate kinase from Citrifermentans bemidjiense (strain ATCC BAA-1014 / DSM 16622 / JCM 12645 / Bem) (Geobacter bemidjiensis).